We begin with the raw amino-acid sequence, 424 residues long: STAM-binding protein (424 aa).

The segment at 1–127 (MSDHGDVSLP…YTEYNEEKKK (127 aa)) is interaction with CHMP3. A phosphoserine mark is found at serine 2 and serine 48. The interaction with STAM stretch occupies residues 227–231 (PAKPP). 3 positions are modified to phosphoserine: serine 243, serine 245, and serine 247. The MPN domain occupies 257–388 (VVVPGRLCPQ…LTDHGLEEIS (132 aa)). The Zn(2+) site is built by histidine 335, histidine 337, aspartate 348, histidine 350, cysteine 390, histidine 396, and histidine 398. Residues 335-348 (HTHPTQTAFLSSVD) carry the JAMM motif motif.

The protein belongs to the peptidase M67C family. Interacts with STAM. Interacts with SMAD6 and SMAD7. Interacts with CHMP3; the interaction appears to relieve the autoinhibition of CHMP3. Interacts with SMURF2 and RNF11; this interaction promotes ubiquitination. Zn(2+) is required as a cofactor. Post-translationally, phosphorylated after BMP type I receptor activation. Ubiquitinated by SMURF2 in the presence of RNF11. Ubiquitously expressed.

The protein resides in the nucleus. It localises to the membrane. Its subcellular location is the cytoplasm. The protein localises to the early endosome. With respect to regulation, inhibited by N-ethylmaleimide. Strongly and specifically inhibited by ubiquitin variants UbV(SP.2) and UbV(SP.3). Also inhibited by UbV(SP.1); an ubiquitin variant that also inhibits STAMBPL1. Its function is as follows. Zinc metalloprotease that specifically cleaves 'Lys-63'-linked polyubiquitin chains. Does not cleave 'Lys-48'-linked polyubiquitin chains. Plays a role in signal transduction for cell growth and MYC induction mediated by IL-2 and GM-CSF. Potentiates BMP (bone morphogenetic protein) signaling by antagonizing the inhibitory action of SMAD6 and SMAD7. Has a key role in regulation of cell surface receptor-mediated endocytosis and ubiquitin-dependent sorting of receptors to lysosomes. Endosomal localization of STAMBP is required for efficient EGFR degradation but not for its internalization. Involved in the negative regulation of PI3K-AKT-mTOR and RAS-MAP signaling pathways. In Homo sapiens (Human), this protein is STAM-binding protein (STAMBP).